The sequence spans 95 residues: Cerebratulus toxin A-III (95 aa).

3 disulfide bridges follow: Cys-17–Cys-38, Cys-23–Cys-34, and Cys-48–Cys-61.

Belongs to the worm cytolysin family.

Its subcellular location is the secreted. In terms of biological role, permeabilizes a variety of cells. Forms large pores which allows the release of large proteins almost as rapidly as small organic molecules and inorganic ions. At sublytic concentrations, the toxin also inhibits protein kinase C and endogenous voltage-gated cation selective (sodium, calcium) channels occurring in the nervous and cardiovascular systems. The chain is Cerebratulus toxin A-III from Cerebratulus lacteus (Milky ribbon worm).